The primary structure comprises 140 residues: Large-conductance mechanosensitive channel (140 aa).

2 helical membrane passes run 16 to 36 (VVDL…VDSI) and 86 to 106 (GSFL…FLMV).

The protein belongs to the MscL family. In terms of assembly, homopentamer.

The protein resides in the cell inner membrane. Its function is as follows. Channel that opens in response to stretch forces in the membrane lipid bilayer. May participate in the regulation of osmotic pressure changes within the cell. This Anaeromyxobacter sp. (strain K) protein is Large-conductance mechanosensitive channel.